The chain runs to 395 residues: Protein-arginine rhamnosyltransferase (395 aa).

Residues 19 to 22 (NYGD), Tyr-205, Gln-272, and 288 to 292 (RGEDS) each bind dTDP-beta-L-rhamnose. The active-site Proton acceptor is Asp-22. Glu-290 is a catalytic residue.

The protein belongs to the glycosyltransferase 104 family.

It catalyses the reaction dTDP-beta-L-rhamnose + L-arginyl-[protein] = N(omega)-(alpha-L-rhamnosyl)-L-arginyl-[protein] + dTDP + H(+). Functionally, protein-arginine rhamnosyltransferase that catalyzes the transfer of a single rhamnose to elongation factor P (EF-P) on 'Lys-32', a modification required for EF-P-dependent rescue of polyproline stalled ribosomes. This is Protein-arginine rhamnosyltransferase from Shewanella oneidensis (strain ATCC 700550 / JCM 31522 / CIP 106686 / LMG 19005 / NCIMB 14063 / MR-1).